The primary structure comprises 103 residues: Flagellar hook-basal body complex protein FliE (103 aa).

This sequence belongs to the FliE family.

The protein localises to the bacterial flagellum basal body. This Photorhabdus laumondii subsp. laumondii (strain DSM 15139 / CIP 105565 / TT01) (Photorhabdus luminescens subsp. laumondii) protein is Flagellar hook-basal body complex protein FliE.